The following is a 172-amino-acid chain: L-amino acid N-acyltransferase MnaT (172 aa).

The N-acetyltransferase domain occupies Met-1–Asp-163. Residues Val-85–Val-87, Gly-93–Arg-98, Asn-124, and Ser-133 contribute to the acetyl-CoA site.

Belongs to the acetyltransferase family. PAT/BAR subfamily.

It carries out the reaction L-methionine + acetyl-CoA = N-acetyl-L-methionine + CoA + H(+). The catalysed reaction is propanoyl-CoA + L-methionine = N-propanoyl-L-methioninate + CoA + H(+). It catalyses the reaction L-alpha-phenylglycine + acetyl-CoA = N-acetyl-L-alpha-phenylglycine + CoA + H(+). The enzyme catalyses L-methionine sulfoximine + acetyl-CoA = N-acetyl-L-methionine sulfoximine + CoA + H(+). It carries out the reaction L-methionine sulfone + acetyl-CoA = N-acetyl-L-methionine sulfone + CoA + H(+). Acyltransferase that appears to be required for E.coli optimal growth rate and yield via the formation of N-acetylated amino acids. Catalyzes the acylation of L-methionine using acetyl-CoA or propanoyl-CoA as acyl donors, and the acetylation of L-phenylglycine. Is also able to N-acylate other free L-amino acids and their derivatives using a CoA thioester as cosubstrate. Using acetyl-CoA as an acyl donor, substrate specificity is methionine sulfone &gt; methionine sulfoximine &gt; methionine sulfoxide &gt; methionine. Asparagine, lysine, glutamine, aspartate and glutamate are very poor substrates. Using methionine as a substrate, acyl donor preference is propanoyl-CoA &gt; acetyl-CoA &gt;&gt; butyryl-CoA. Likely plays a role in the resistance against the toxic effects of L-methionine sulfoximine (MSX), via its ability to catalyze its acetylation; MSX is a rare amino acid which inhibits glutamine synthetase (GlnA). This chain is L-amino acid N-acyltransferase MnaT, found in Escherichia coli (strain K12).